The chain runs to 344 residues: UDP-N-acetylenolpyruvoylglucosamine reductase (344 aa).

The region spanning 17 to 187 (VDYACSELIS…TGVGIKLAKK (171 aa)) is the FAD-binding PCMH-type domain. Arg163 is an active-site residue. Ser233 functions as the Proton donor in the catalytic mechanism. Residue Glu329 is part of the active site.

Belongs to the MurB family. It depends on FAD as a cofactor.

Its subcellular location is the cytoplasm. The enzyme catalyses UDP-N-acetyl-alpha-D-muramate + NADP(+) = UDP-N-acetyl-3-O-(1-carboxyvinyl)-alpha-D-glucosamine + NADPH + H(+). Its pathway is cell wall biogenesis; peptidoglycan biosynthesis. Functionally, cell wall formation. The polypeptide is UDP-N-acetylenolpyruvoylglucosamine reductase (Shewanella sediminis (strain HAW-EB3)).